Here is a 278-residue protein sequence, read N- to C-terminus: Tryptophan synthase alpha chain (278 aa).

Catalysis depends on proton acceptor residues E49 and D60.

It belongs to the TrpA family. In terms of assembly, tetramer of two alpha and two beta chains.

It carries out the reaction (1S,2R)-1-C-(indol-3-yl)glycerol 3-phosphate + L-serine = D-glyceraldehyde 3-phosphate + L-tryptophan + H2O. It functions in the pathway amino-acid biosynthesis; L-tryptophan biosynthesis; L-tryptophan from chorismate: step 5/5. The alpha subunit is responsible for the aldol cleavage of indoleglycerol phosphate to indole and glyceraldehyde 3-phosphate. This chain is Tryptophan synthase alpha chain, found in Granulibacter bethesdensis (strain ATCC BAA-1260 / CGDNIH1).